Reading from the N-terminus, the 91-residue chain is DNA-directed RNA polymerase subunit omega (91 aa).

This sequence belongs to the RNA polymerase subunit omega family. As to quaternary structure, the RNAP catalytic core consists of 2 alpha, 1 beta, 1 beta' and 1 omega subunit. When a sigma factor is associated with the core the holoenzyme is formed, which can initiate transcription.

It catalyses the reaction RNA(n) + a ribonucleoside 5'-triphosphate = RNA(n+1) + diphosphate. Its function is as follows. Promotes RNA polymerase assembly. Latches the N- and C-terminal regions of the beta' subunit thereby facilitating its interaction with the beta and alpha subunits. This is DNA-directed RNA polymerase subunit omega from Pectobacterium atrosepticum (strain SCRI 1043 / ATCC BAA-672) (Erwinia carotovora subsp. atroseptica).